A 472-amino-acid polypeptide reads, in one-letter code: Ribosomal protein uS12 methylthiotransferase RimO (472 aa).

The MTTase N-terminal domain maps to 33 to 143 (NRIGFVSLGC…VLKHVHKYVP (111 aa)). C42, C78, C107, C175, C179, and C182 together coordinate [4Fe-4S] cluster. The region spanning 161 to 398 (LTPKHYAYLK…MEVQAEISAE (238 aa)) is the Radical SAM core domain. A TRAM domain is found at 401–467 (ARFVGRTLDI…EHDLWAEVVD (67 aa)).

This sequence belongs to the methylthiotransferase family. RimO subfamily. [4Fe-4S] cluster serves as cofactor.

Its subcellular location is the cytoplasm. It carries out the reaction L-aspartate(89)-[ribosomal protein uS12]-hydrogen + (sulfur carrier)-SH + AH2 + 2 S-adenosyl-L-methionine = 3-methylsulfanyl-L-aspartate(89)-[ribosomal protein uS12]-hydrogen + (sulfur carrier)-H + 5'-deoxyadenosine + L-methionine + A + S-adenosyl-L-homocysteine + 2 H(+). In terms of biological role, catalyzes the methylthiolation of an aspartic acid residue of ribosomal protein uS12. In Shewanella baltica (strain OS195), this protein is Ribosomal protein uS12 methylthiotransferase RimO.